The chain runs to 601 residues: Pyranose 2-oxidase (601 aa).

His-151 is modified (tele-8alpha-FAD histidine). Substrate-binding residues include Gln-406 and His-408. Residue His-505 is the Proton acceptor of the active site. The active site involves Asn-558. Residues 577–601 (KLGKKGSHSGNRDDGDVDTDTDDDA) form a disordered region. Acidic residues predominate over residues 591 to 601 (GDVDTDTDDDA).

Belongs to the GMC oxidoreductase family. As to quaternary structure, homotetramer. FAD serves as cofactor.

It catalyses the reaction D-glucose + O2 = 2-dehydro-D-glucose + H2O2. Catalyzes the oxidation of various aldopyranoses and disaccharides on carbon-2 to the corresponding 2-keto sugars concomitant with the reduction of O(2) to H(2)O(2). In Emericella nidulans (strain FGSC A4 / ATCC 38163 / CBS 112.46 / NRRL 194 / M139) (Aspergillus nidulans), this protein is Pyranose 2-oxidase (p2ox).